Here is a 273-residue protein sequence, read N- to C-terminus: 3-methyl-2-oxobutanoate hydroxymethyltransferase (273 aa).

The Mg(2+) site is built by Asp53 and Asp92. Residues 53-54, Asp92, and Lys120 each bind 3-methyl-2-oxobutanoate; that span reads DS. Glu122 serves as a coordination point for Mg(2+). Glu189 functions as the Proton acceptor in the catalytic mechanism.

This sequence belongs to the PanB family. Homodecamer; pentamer of dimers. Requires Mg(2+) as cofactor.

It localises to the cytoplasm. The enzyme catalyses 3-methyl-2-oxobutanoate + (6R)-5,10-methylene-5,6,7,8-tetrahydrofolate + H2O = 2-dehydropantoate + (6S)-5,6,7,8-tetrahydrofolate. It functions in the pathway cofactor biosynthesis; (R)-pantothenate biosynthesis; (R)-pantoate from 3-methyl-2-oxobutanoate: step 1/2. Its function is as follows. Catalyzes the reversible reaction in which hydroxymethyl group from 5,10-methylenetetrahydrofolate is transferred onto alpha-ketoisovalerate to form ketopantoate. This chain is 3-methyl-2-oxobutanoate hydroxymethyltransferase, found in Cupriavidus necator (strain ATCC 17699 / DSM 428 / KCTC 22496 / NCIMB 10442 / H16 / Stanier 337) (Ralstonia eutropha).